The following is a 543-amino-acid chain: Malate synthase (543 aa).

Arg-162 (proton acceptor) is an active-site residue. Asp-449 acts as the Proton donor in catalysis.

The protein belongs to the malate synthase family.

The enzyme catalyses glyoxylate + acetyl-CoA + H2O = (S)-malate + CoA + H(+). It functions in the pathway carbohydrate metabolism; glyoxylate cycle; (S)-malate from isocitrate: step 2/2. This is Malate synthase (masA) from Dictyostelium discoideum (Social amoeba).